A 404-amino-acid polypeptide reads, in one-letter code: 6-hydroxytryptophan 2,3-dioxygenase fscD (404 aa).

A heme b-binding site is contributed by His341.

Belongs to the indoleamine 2,3-dioxygenase family. Heme serves as cofactor.

It participates in secondary metabolite biosynthesis. In terms of biological role, 6-hydroxytryptophan 2,3-dioxygenase; part of the fragmented gene cluster that mediates the biosynthesis of fusarochromene, a tryptophan-derived metabolite closely related to a group of mycotoxins including fusarochromanone. Within the pathway, fscD is responsible of the cleavage of the pyrrole ring of 6-hydroxytryptophan. The first step of the pathway is the epimerization of L-tryptophan to D-tryptophan in the presence of the NRPS-like tryptophan epimerase fscC. D-tryptophan is subsequently hydroxylated by the tryptophan 6-hydroxylase fscE to yield 6-hydroxytryptophan. The pyrrole ring undergoes cleavaged by the tryptophan 2,3-dioxygenase fscD and is finally converted to 4-hydroxykyrunenine by the hydrolase fscH. The NRPS-like oxidoreductase fscA reduces the carboxyl group to primary alcohol and the DMATS-type prenyltransferase fscG performs prenylation, followed by the formation of a chromene ring catalyzed by the oxidoreductase fscI, which leads to desacetylfusarochromene. Epoxidation by fscF and rearrangement reactions of chromene double bonds convert compound desacetylfusarochromene to fusarochromanones. Although specific acetyltransferases were not found near the fsc gene cluster, several predicted enzymes containing the N-acetyltransferase superfamily domain are present in the genome of F.equiseti. These predicted enzymes may have the potential to convert desacetylfusarochromene to fusarochromene. This is 6-hydroxytryptophan 2,3-dioxygenase fscD from Fusarium equiseti (Fusarium scirpi).